An 83-amino-acid polypeptide reads, in one-letter code: Toxin Aam1 (83 aa).

The first 19 residues, 1-19 (MNYLVMISLALLLMIGVES), serve as a signal peptide directing secretion. Residues 21–82 (RDGYIVYPHN…PIYDRSYKCY (62 aa)) enclose the LCN-type CS-alpha/beta domain. Cystine bridges form between Cys-31–Cys-81, Cys-35–Cys-53, Cys-39–Cys-63, and Cys-43–Cys-65.

The protein belongs to the long (4 C-C) scorpion toxin superfamily. Sodium channel inhibitor family. Alpha subfamily. The C-terminal basic residue is removed by a carboxypeptidase. Expressed by the venom gland.

The protein localises to the secreted. Functionally, alpha toxins bind voltage-independently at site-3 of sodium channels (Nav) and inhibit the inactivation of the activated channels, thereby blocking neuronal transmission. This chain is Toxin Aam1 (H1), found in Androctonus amoreuxi (African fattail scorpion).